The sequence spans 423 residues: Glutamyl-tRNA reductase (423 aa).

Substrate-binding positions include 49–52 (TCNR), S107, 112–114 (EPQ), and Q118. Catalysis depends on C50, which acts as the Nucleophile. Position 187–192 (187–192 (GAGETI)) interacts with NADP(+).

This sequence belongs to the glutamyl-tRNA reductase family. Homodimer.

It carries out the reaction (S)-4-amino-5-oxopentanoate + tRNA(Glu) + NADP(+) = L-glutamyl-tRNA(Glu) + NADPH + H(+). It functions in the pathway porphyrin-containing compound metabolism; protoporphyrin-IX biosynthesis; 5-aminolevulinate from L-glutamyl-tRNA(Glu): step 1/2. Its function is as follows. Catalyzes the NADPH-dependent reduction of glutamyl-tRNA(Glu) to glutamate 1-semialdehyde (GSA). The polypeptide is Glutamyl-tRNA reductase (Pseudoalteromonas atlantica (strain T6c / ATCC BAA-1087)).